A 159-amino-acid chain; its full sequence is Putative pre-16S rRNA nuclease (159 aa).

Belongs to the YqgF nuclease family.

Its subcellular location is the cytoplasm. In terms of biological role, could be a nuclease involved in processing of the 5'-end of pre-16S rRNA. The protein is Putative pre-16S rRNA nuclease of Bartonella henselae (strain ATCC 49882 / DSM 28221 / CCUG 30454 / Houston 1) (Rochalimaea henselae).